Here is a 238-residue protein sequence, read N- to C-terminus: 7-cyano-7-deazaguanine synthase (238 aa).

Residue phenylalanine 14 to leucine 24 participates in ATP binding. Residues cysteine 202, cysteine 217, cysteine 220, and cysteine 223 each coordinate Zn(2+).

It belongs to the QueC family. Zn(2+) serves as cofactor.

It catalyses the reaction 7-carboxy-7-deazaguanine + NH4(+) + ATP = 7-cyano-7-deazaguanine + ADP + phosphate + H2O + H(+). The protein operates within purine metabolism; 7-cyano-7-deazaguanine biosynthesis. Catalyzes the ATP-dependent conversion of 7-carboxy-7-deazaguanine (CDG) to 7-cyano-7-deazaguanine (preQ(0)). This Nitrobacter winogradskyi (strain ATCC 25391 / DSM 10237 / CIP 104748 / NCIMB 11846 / Nb-255) protein is 7-cyano-7-deazaguanine synthase.